The sequence spans 184 residues: Elongation factor P (184 aa).

The protein belongs to the elongation factor P family.

The protein localises to the cytoplasm. It participates in protein biosynthesis; polypeptide chain elongation. Its function is as follows. Involved in peptide bond synthesis. Stimulates efficient translation and peptide-bond synthesis on native or reconstituted 70S ribosomes in vitro. Probably functions indirectly by altering the affinity of the ribosome for aminoacyl-tRNA, thus increasing their reactivity as acceptors for peptidyl transferase. This Albidiferax ferrireducens (strain ATCC BAA-621 / DSM 15236 / T118) (Rhodoferax ferrireducens) protein is Elongation factor P.